The following is an 87-amino-acid chain: Prolactin-releasing peptide (87 aa).

An N-terminal signal peptide occupies residues 1 to 22; the sequence is MKVLRAWLLCLLMLGLALRGAA. Position 53 is a phenylalanine amide (F53). The propeptide occupies 58–87; it reads ATLGDVPKPGLRPRLTCFPLEGGAMSSQDG.

As to expression, medulla oblongata and hypothalamus.

It is found in the secreted. Its function is as follows. Stimulates prolactin (PRL) release and regulates the expression of prolactin through its receptor GPR10. May stimulate lactotrophs directly to secrete PRL. The sequence is that of Prolactin-releasing peptide (PRLH) from Homo sapiens (Human).